The chain runs to 95 residues: UPF0125 protein BUsg_244 (95 aa).

Belongs to the UPF0125 (RnfH) family.

The protein is UPF0125 protein BUsg_244 of Buchnera aphidicola subsp. Schizaphis graminum (strain Sg).